We begin with the raw amino-acid sequence, 227 residues long: Pectinesterase inhibitor 28 (227 aa).

Positions 1–25 (MASSMAPAAAMAILLLALLMPATLC) are cleaved as a signal peptide. Residues 28–50 (SGPPSSKHGHGGHAKRAPPPASP) are disordered. The span at 34-43 (KHGHGGHAKR) shows a compositional bias: basic residues. Residues C66 and C75 are joined by a disulfide bond. 3 N-linked (GlcNAc...) asparagine glycosylation sites follow: N67, N104, and N117. C139 and C179 are joined by a disulfide.

Belongs to the PMEI family. In terms of tissue distribution, expressed in roots, leaves, culms and flag leaves.

It localises to the secreted. The protein resides in the extracellular space. It is found in the apoplast. Pectin methylesterase (PME) inhibitor that inhibits PME in vitro. Functions as a critical structural modulator by regulating the degree of pectin methylesterification and the physiochemical properties of the cell wall components. This Oryza sativa subsp. japonica (Rice) protein is Pectinesterase inhibitor 28.